The chain runs to 445 residues: RNA-binding protein asd-2 (445 aa).

A disordered region spans residues 22 to 63 (TVIPPPPNDSGHEFIGPSSGPPQVTITPSGVQSGSANGVSTS). Residues 42 to 63 (PPQVTITPSGVQSGSANGVSTS) are compositionally biased toward polar residues. The interval 71–128 (EYLSQLLKDKKQLAAFPNVFHHLERLADEEINKVRVVLFQCEFSKESAPLPDAEGDST) is qua1 domain. The 27-residue stretch at 145–171 (NFVGRILGPRGMTAKQLEQETGCKIMV) folds into the KH domain. A qua2 domain; involved in RNA binding region spans residues 230-253 (APEGEDDLKRKQLMELAIINGTYR).

As to quaternary structure, interacts with sup-12; in the presence of RNA, but with weak affinity in the absence of RNA. In terms of tissue distribution, isoform b: Expressed in the hypodermis and pharyngeal muscles. Isoform c: Expressed in body wall muscles and phayngeal muscles.

It localises to the nucleus. RNA-binding protein that binds to the 5'-NACUAAY-N(1,20)-UAAY-3' consensus sequence in pre-mRNA introns to promote alternative splicing. Required for mutually exclusive alternative splicing where it modulates the switch between mutually exclusive exons during pre-mRNA maturation. Involved in muscle-specific gene expression regulating the alternative splicing of genes such as let-2 and unc-60 to ensure that their respective isoforms are expressed in muscle. Promotes the removal of intron 10 from let-2 pre-mRNA to allow for the exclusive expression of the muscle-specific let-2 isoform (as opposed to the non-muscle-specific isoform expressed in embryos) in body wall muscles during late larval and adult stages of development. Binds cooperatively with RNA-binding protein sup-12 to intron 1A of the unc-60 pre-mRNA to promote alternative splicing and expression of the muscle specific isoform of unc-60. This Caenorhabditis elegans protein is RNA-binding protein asd-2.